We begin with the raw amino-acid sequence, 460 residues long: Orexin receptor type 2 (460 aa).

The Extracellular segment spans residues 1 to 54 (MSSTKLEDSLPRRNWSSASELNETQEPFLNPTDYDDEEFLRYLWREYLHPKEYE). N-linked (GlcNAc...) asparagine glycans are attached at residues Asn14 and Asn22. Positions 33 to 49 (DYDDEEFLRYLWREYLH) are required for response to orexin-A. The helical transmembrane segment at 55 to 75 (WVLIAGYIIVFVVALIGNVLV) threads the bilayer. Residues 76-88 (CVAVWKNHHMRTV) lie on the Cytoplasmic side of the membrane. Residues 89–110 (TNYFIVNLSLADVLVTITCLPA) traverse the membrane as a helical segment. Residues 111-127 (TLVVDITETWFFGQSLC) lie on the Extracellular side of the membrane. Cys127 and Cys210 are oxidised to a cystine. A helical membrane pass occupies residues 128–150 (KVIPYLQTVSVSVSVLTLSCIAL). The Cytoplasmic segment spans residues 151–170 (DRWYAICHPLMFKSTAKRAR). The helical transmembrane segment at 171 to 191 (NSIVVIWIVSCIIMIPQAIVM) threads the bilayer. The Extracellular portion of the chain corresponds to 192-222 (ERSSMLPGLANKTTLFTVCDERWGGEVYPKM). An N-linked (GlcNAc...) asparagine glycan is attached at Asn202. Residues 223 to 243 (YHICFFLVTYMAPLCLMVLAY) traverse the membrane as a helical segment. Topologically, residues 244 to 304 (LQIFRKLWCR…QIRARRKTAR (61 aa)) are cytoplasmic. The helical transmembrane segment at 305-326 (MLMVVLLVFAICYLPISILNVL) threads the bilayer. The Extracellular segment spans residues 327–342 (KRVFGMFTHTEDRETV). Residues 343 to 366 (YAWFTFSHWLVYANSAANPIIYNF) form a helical membrane-spanning segment. The Cytoplasmic portion of the chain corresponds to 367-460 (LSGKFREEFK…SSLLSTWLEV (94 aa)).

Belongs to the G-protein coupled receptor 1 family. In terms of tissue distribution, expressed in the brain in the cerebral cortex, septal nuclei, hippocampus, medial thalamic groups, dorsal and median raphe nuclei, and many hypothalamic nuclei including the tuberomammillary nucleus, dorsomedial hypothalamus, paraventricular hypothalamic nucleus, and ventral premammillary nucleus. Not detected in the spleen, lung, liver, skeletal muscle, kidney and testis. Orexin receptor mRNA expression has also been reported in the adrenal gland, enteric nervous system, and pancreas.

The protein localises to the cell membrane. In terms of biological role, nonselective, high-affinity receptor for both orexin-A and orexin-B neuropeptides. Triggers an increase in cytoplasmic Ca(2+) levels in response to orexin-A binding. This is Orexin receptor type 2 (Hcrtr2) from Rattus norvegicus (Rat).